Consider the following 738-residue polypeptide: DNA topoisomerase 4 subunit A (738 aa).

A Topo IIA-type catalytic domain is found at 32–496; that stretch reads LPDVRDGLKP…SFEEVDLTNQ (465 aa). Residue Tyr-120 is the O-(5'-phospho-DNA)-tyrosine intermediate of the active site.

This sequence belongs to the type II topoisomerase GyrA/ParC subunit family. ParC type 1 subfamily. In terms of assembly, heterotetramer composed of ParC and ParE.

It localises to the cell membrane. The catalysed reaction is ATP-dependent breakage, passage and rejoining of double-stranded DNA.. Topoisomerase IV is essential for chromosome segregation. It relaxes supercoiled DNA. Performs the decatenation events required during the replication of a circular DNA molecule. The protein is DNA topoisomerase 4 subunit A of Rickettsia prowazekii (strain Madrid E).